The primary structure comprises 553 residues: Putative transport protein YidE (553 aa).

A run of 5 helical transmembrane segments spans residues 4–24, 28–48, 65–85, 95–115, and 158–178; these read IALT…IGNV, GVGL…HFVS, FGLI…FFAS, LFAV…HKLF, and MSYA…MWML. RCK C-terminal domains follow at residues 191–276 and 279–361; these read QQHE…VIGQ and DTSL…VLGN. A run of 6 helical transmembrane segments spans residues 371–391, 393–413, 439–459, 464–484, 493–513, and 533–553; these read MLPV…PVFV, GFPA…ALIL, IVLF…HTLV, LSWI…VGIL, YLTM…LAFA, and LVMF…WSIG.

This sequence belongs to the AAE transporter (TC 2.A.81) family. YidE subfamily.

It is found in the cell membrane. The sequence is that of Putative transport protein YidE from Escherichia coli O127:H6 (strain E2348/69 / EPEC).